Here is a 471-residue protein sequence, read N- to C-terminus: Glutamine synthetase (471 aa).

Residues 14–99 (QKIQMIDLKF…ICSIKEPRTG (86 aa)) enclose the GS beta-grasp domain. Residues 106–471 (PRVIAQKAID…PYEFYLYYDC (366 aa)) form the GS catalytic domain. Mg(2+) is bound by residues Glu-131 and Glu-133. Glu-208 lines the ATP pocket. Glu-213 and Glu-221 together coordinate Mg(2+). L-glutamate contacts are provided by residues 265 to 266 (NG) and Gly-266. His-270 is a binding site for Mg(2+). Residues 272 to 274 (HQS) and Ser-274 contribute to the ATP site. Residues Arg-322, Glu-328, and Arg-340 each contribute to the L-glutamate site. The ATP site is built by Arg-340, Arg-345, and Lys-354. Glu-359 lines the Mg(2+) pocket. Residue Arg-361 coordinates L-glutamate. O-AMP-tyrosine is present on Tyr-399.

The protein belongs to the glutamine synthetase family. Oligomer of 12 subunits arranged in the form of two hexagons. Requires Mg(2+) as cofactor.

The protein localises to the cytoplasm. It carries out the reaction L-glutamate + NH4(+) + ATP = L-glutamine + ADP + phosphate + H(+). The activity of this enzyme could be controlled by adenylation under conditions of abundant glutamine. Involved in nitrogen metabolism via ammonium assimilation. Catalyzes the ATP-dependent biosynthesis of glutamine from glutamate and ammonia. This chain is Glutamine synthetase, found in Microchaete diplosiphon (Fremyella diplosiphon).